Here is a 255-residue protein sequence, read N- to C-terminus: uncharacterized protein (255 aa).

The N-terminal stretch at 1–18 (MRILIILSIILCSLFTKA) is a signal peptide.

Belongs to the MlaA family.

This is an uncharacterized protein from Rickettsia bellii (strain RML369-C).